We begin with the raw amino-acid sequence, 385 residues long: 8-amino-7-oxononanoate synthase (385 aa).

Residue Arg-21 coordinates substrate. Gly-108–Phe-109 is a pyridoxal 5'-phosphate binding site. His-133 contacts substrate. The pyridoxal 5'-phosphate site is built by Ser-179, His-207, and Thr-233. Lys-236 is subject to N6-(pyridoxal phosphate)lysine. Thr-352 contacts substrate.

Belongs to the class-II pyridoxal-phosphate-dependent aminotransferase family. BioF subfamily. In terms of assembly, homodimer. The cofactor is pyridoxal 5'-phosphate.

It catalyses the reaction 6-carboxyhexanoyl-[ACP] + L-alanine + H(+) = (8S)-8-amino-7-oxononanoate + holo-[ACP] + CO2. The protein operates within cofactor biosynthesis; biotin biosynthesis. Functionally, catalyzes the decarboxylative condensation of pimeloyl-[acyl-carrier protein] and L-alanine to produce 8-amino-7-oxononanoate (AON), [acyl-carrier protein], and carbon dioxide. This chain is 8-amino-7-oxononanoate synthase, found in Salmonella agona (strain SL483).